The primary structure comprises 168 residues: Phosphopantetheine adenylyltransferase (168 aa).

Thr-11 lines the substrate pocket. Residues 11–12 and His-19 each bind ATP; that span reads TF. Residues Lys-43, Thr-75, and Arg-89 each coordinate substrate. Residues 90–92, Glu-100, and 125–131 contribute to the ATP site; these read GIR and WSYMSSS.

It belongs to the bacterial CoaD family. Homohexamer. Mg(2+) is required as a cofactor.

The protein localises to the cytoplasm. It carries out the reaction (R)-4'-phosphopantetheine + ATP + H(+) = 3'-dephospho-CoA + diphosphate. Its pathway is cofactor biosynthesis; coenzyme A biosynthesis; CoA from (R)-pantothenate: step 4/5. Reversibly transfers an adenylyl group from ATP to 4'-phosphopantetheine, yielding dephospho-CoA (dPCoA) and pyrophosphate. This is Phosphopantetheine adenylyltransferase from Wigglesworthia glossinidia brevipalpis.